Consider the following 990-residue polypeptide: TonB-dependent receptor P26 (990 aa).

The TonB box signature appears at 86 to 93 (DEVVVIGY). The region spanning 97–213 (RKSDLTGSVS…ANGVVLVTTK (117 aa)) is the TBDR plug domain. The 771-residue stretch at 220-990 (SSKPEVSANI…TITLGLNVTF (771 aa)) folds into the TBDR beta-barrel domain. The segment at 878–902 (TPENPTSDIPRAGGDSVTGTPPNSA) is disordered. The TonB C-terminal box signature appears at 974–990 (GSYPNPRTITLGLNVTF).

This sequence belongs to the TonB-dependent receptor family.

It localises to the cell outer membrane. In terms of biological role, tonB-dependent receptor probably involved in ulvan degradation. Ulvan is the main polysaccharide component of the Ulvales (green seaweed) cell wall. It is composed of disaccharide building blocks comprising 3-sulfated rhamnose (Rha3S) linked to D-glucuronic acid (GlcA), L-iduronic acid (IduA), or D-xylose (Xyl). The TonB-dependent receptor may mediate transport of ulvan oligosaccharides from the surface of the outer membrane to the periplasm for subsequent degradation. This Formosa agariphila (strain DSM 15362 / KCTC 12365 / LMG 23005 / KMM 3901 / M-2Alg 35-1) protein is TonB-dependent receptor P26.